A 310-amino-acid polypeptide reads, in one-letter code: tRNA-dihydrouridine(16) synthase (310 aa).

FMN-binding positions include 7–9 (PMQ) and glutamine 68. Cysteine 98 serves as the catalytic Proton donor. Residues lysine 139, 200-202 (NGE), and 224-225 (GR) each bind FMN.

The protein belongs to the Dus family. DusC subfamily. Requires FMN as cofactor.

It carries out the reaction 5,6-dihydrouridine(16) in tRNA + NADP(+) = uridine(16) in tRNA + NADPH + H(+). The catalysed reaction is 5,6-dihydrouridine(16) in tRNA + NAD(+) = uridine(16) in tRNA + NADH + H(+). Its function is as follows. Catalyzes the synthesis of 5,6-dihydrouridine (D), a modified base found in the D-loop of most tRNAs, via the reduction of the C5-C6 double bond in target uridines. Specifically modifies U16 in tRNAs. The sequence is that of tRNA-dihydrouridine(16) synthase from Haemophilus influenzae (strain ATCC 51907 / DSM 11121 / KW20 / Rd).